We begin with the raw amino-acid sequence, 274 residues long: tRNA pseudouridine synthase A (274 aa).

The active-site Nucleophile is Asp51. Tyr109 contacts substrate.

The protein belongs to the tRNA pseudouridine synthase TruA family. As to quaternary structure, homodimer.

The enzyme catalyses uridine(38/39/40) in tRNA = pseudouridine(38/39/40) in tRNA. In terms of biological role, formation of pseudouridine at positions 38, 39 and 40 in the anticodon stem and loop of transfer RNAs. This chain is tRNA pseudouridine synthase A, found in Acidovorax ebreus (strain TPSY) (Diaphorobacter sp. (strain TPSY)).